Consider the following 429-residue polypeptide: Saccharopine dehydrogenase-like oxidoreductase (429 aa).

N-acetylalanine is present on alanine 2. 3 positions are modified to phosphoserine: serine 209, serine 215, and serine 217.

Belongs to the saccharopine dehydrogenase family.

This is Saccharopine dehydrogenase-like oxidoreductase (Sccpdh) from Rattus norvegicus (Rat).